The sequence spans 228 residues: Orotidine 5'-phosphate decarboxylase (228 aa).

Residues D10, K33, 60-69, T116, R178, Q187, G207, and R208 each bind substrate; that span reads DLKLYDIPHT. K62 acts as the Proton donor in catalysis.

Belongs to the OMP decarboxylase family. Type 1 subfamily. Homodimer.

It catalyses the reaction orotidine 5'-phosphate + H(+) = UMP + CO2. The protein operates within pyrimidine metabolism; UMP biosynthesis via de novo pathway; UMP from orotate: step 2/2. Functionally, catalyzes the decarboxylation of orotidine 5'-monophosphate (OMP) to uridine 5'-monophosphate (UMP). The sequence is that of Orotidine 5'-phosphate decarboxylase from Oenococcus oeni (strain ATCC BAA-331 / PSU-1).